The following is a 1200-amino-acid chain: ATP-dependent helicase/deoxyribonuclease subunit B (1200 aa).

This sequence belongs to the helicase family. AddB/RexB type 2 subfamily. As to quaternary structure, heterodimer of AddA and RexB. Requires Mg(2+) as cofactor.

In terms of biological role, the heterodimer acts as both an ATP-dependent DNA helicase and an ATP-dependent, dual-direction single-stranded exonuclease. Recognizes the chi site generating a DNA molecule suitable for the initiation of homologous recombination. This subunit has 5' -&gt; 3' nuclease activity but not helicase activity. The protein is ATP-dependent helicase/deoxyribonuclease subunit B of Lactiplantibacillus plantarum (strain ATCC BAA-793 / NCIMB 8826 / WCFS1) (Lactobacillus plantarum).